We begin with the raw amino-acid sequence, 100 residues long: MKITQEEVTHVANLSKLKFSPEETAEFATTLSKIVDMVELLEEVDTTGVAPTTTMADRKTVLRPDVAEKGTDRDRLFKNVPEKDNYYIKVPAILEDGGDA.

Belongs to the GatC family. In terms of assembly, heterotrimer of A, B and C subunits.

It catalyses the reaction L-glutamyl-tRNA(Gln) + L-glutamine + ATP + H2O = L-glutaminyl-tRNA(Gln) + L-glutamate + ADP + phosphate + H(+). The enzyme catalyses L-aspartyl-tRNA(Asn) + L-glutamine + ATP + H2O = L-asparaginyl-tRNA(Asn) + L-glutamate + ADP + phosphate + 2 H(+). In terms of biological role, allows the formation of correctly charged Asn-tRNA(Asn) or Gln-tRNA(Gln) through the transamidation of misacylated Asp-tRNA(Asn) or Glu-tRNA(Gln) in organisms which lack either or both of asparaginyl-tRNA or glutaminyl-tRNA synthetases. The reaction takes place in the presence of glutamine and ATP through an activated phospho-Asp-tRNA(Asn) or phospho-Glu-tRNA(Gln). This chain is Aspartyl/glutamyl-tRNA(Asn/Gln) amidotransferase subunit C, found in Streptococcus thermophilus (strain ATCC BAA-491 / LMD-9).